Here is a 66-residue protein sequence, read N- to C-terminus: MAKGKDIRVIVILECTGCDKKSVNKESTGISRYITKKNRQNTPSRLELRKFCPRCCKHTIHAEIKK.

The protein belongs to the bacterial ribosomal protein bL33 family.

Its subcellular location is the plastid. The protein resides in the chloroplast. This Glycine max (Soybean) protein is Large ribosomal subunit protein bL33c.